A 535-amino-acid chain; its full sequence is MAKKVAVIGAGVSGLISLKCCVDEGLEPTCFERTEDIGGVWRFKEKVEDGRASIYQSVVTNTSKEMSCFSDFPMPEDFPNFLHNSKLLEYFRIFAKKFDLLKYIQFQTTVLSVRKCPDFSSSGQWKVVTQSNGKEQSAVFDAVMVCTGHHFLPHIPLKSFPGIERFKGQYFHSRQYKHPDGFEGKRILVIGMGNSGSDIAVELSKSAAQVFISTRHGTWVMSRVSEDGYPWDSVFHTRFRSMLRNVLPRTVVKWMIEQQMNQWFNHENYGLEPQNKYIMKEPVLNDDVPSRLLCGAIKVKSTVKELTETSAIFEDGTVEENIDVIIFATGYSFSFPFLEDSLVKVENNMVSLYKYIFPAHLEKSTFACIGLIQPLGSIFPTAELQARWVTRVFKGLCHLPSERTMMMDIIKRNEKRIDLFGESQSQTLQTNYVDYLDELALEIGAKPDFCSLLFKDPKLAVRLFFGPCNSYQYRLAGPGQWEGARSAIFTQKQRILKPLKTRVLKDSSNFPVSFLLKILGLVAVVVAFFCQLQWS.

A2 carries the post-translational modification N-acetylalanine. Residues 9-13, E32, 40-41, and 61-62 contribute to the FAD site; these read GAGVS, VW, and NT. NADP(+) is bound by residues 60-61 and 195-198; these read TN and SGSD. A Glycyl lysine isopeptide (Lys-Gly) (interchain with G-Cter in SUMO) cross-link involves residue K492. Residues 510 to 530 form a helical membrane-spanning segment; sequence FPVSFLLKILGLVAVVVAFFC.

It belongs to the FMO family. FAD is required as a cofactor. It depends on Mg(2+) as a cofactor.

It is found in the microsome membrane. Its subcellular location is the endoplasmic reticulum membrane. The catalysed reaction is N,N-dimethylaniline + NADPH + O2 + H(+) = N,N-dimethylaniline N-oxide + NADP(+) + H2O. Its function is as follows. Catalyzes the oxidative metabolism of numerous xenobiotics, including mainly therapeutic drugs and insecticides that contain a soft nucleophile, most commonly nitrogen and sulfur and participates to their bioactivation. This is Dimethylaniline monooxygenase [N-oxide-forming] 2 from Macaca mulatta (Rhesus macaque).